A 120-amino-acid chain; its full sequence is NAD(P)H-quinone oxidoreductase subunit 3, chloroplastic (120 aa).

3 helical membrane passes run F10–V30, M64–M84, and V88–L108.

Belongs to the complex I subunit 3 family. NDH is composed of at least 16 different subunits, 5 of which are encoded in the nucleus.

The protein resides in the plastid. It is found in the chloroplast thylakoid membrane. It catalyses the reaction a plastoquinone + NADH + (n+1) H(+)(in) = a plastoquinol + NAD(+) + n H(+)(out). The enzyme catalyses a plastoquinone + NADPH + (n+1) H(+)(in) = a plastoquinol + NADP(+) + n H(+)(out). Its function is as follows. NDH shuttles electrons from NAD(P)H:plastoquinone, via FMN and iron-sulfur (Fe-S) centers, to quinones in the photosynthetic chain and possibly in a chloroplast respiratory chain. The immediate electron acceptor for the enzyme in this species is believed to be plastoquinone. Couples the redox reaction to proton translocation, and thus conserves the redox energy in a proton gradient. This is NAD(P)H-quinone oxidoreductase subunit 3, chloroplastic from Ipomoea purpurea (Common morning glory).